Consider the following 272-residue polypeptide: Shikimate dehydrogenase (NADP(+)) (272 aa).

Shikimate-binding positions include 14–16 (SLS) and Thr61. Lys65 acts as the Proton acceptor in catalysis. Asp102 provides a ligand contact to shikimate. NADP(+)-binding positions include 127 to 131 (GAGGA), 151 to 156 (NRTPSK), and Leu215. Tyr217 lines the shikimate pocket. Gly239 contributes to the NADP(+) binding site.

It belongs to the shikimate dehydrogenase family. As to quaternary structure, homodimer.

The enzyme catalyses shikimate + NADP(+) = 3-dehydroshikimate + NADPH + H(+). Its pathway is metabolic intermediate biosynthesis; chorismate biosynthesis; chorismate from D-erythrose 4-phosphate and phosphoenolpyruvate: step 4/7. Involved in the biosynthesis of the chorismate, which leads to the biosynthesis of aromatic amino acids. Catalyzes the reversible NADPH linked reduction of 3-dehydroshikimate (DHSA) to yield shikimate (SA). This is Shikimate dehydrogenase (NADP(+)) from Coxiella burnetii (strain Dugway 5J108-111).